The sequence spans 246 residues: Metallo-beta-lactamase type 2 (246 aa).

The signal sequence occupies residues 1–20 (MKKLFVLCVCFFCSITAAGA). Residues His95, His97, Asp99, His157, and Cys176 each coordinate Zn(2+). Residue Asp99 coordinates a beta-lactam. Positions 179 and 185 each coordinate a beta-lactam. His215 is a binding site for Zn(2+).

Belongs to the metallo-beta-lactamase superfamily. Class-B beta-lactamase family. As to quaternary structure, monomer. It depends on Zn(2+) as a cofactor.

It localises to the periplasm. The enzyme catalyses a beta-lactam + H2O = a substituted beta-amino acid. In terms of biological role, confers resistance to the different beta-lactam antibiotics (penicillin, cephalosporin and carbapenem) via the hydrolysis of the beta-lactam ring. Exhibits higher catalytic efficiency toward ticarcillin and piperacillin than blaIMP-1. Exhibits catalytic activity for carbapenem compounds, but has a preference for imipenem and ertapenem over meropenem. Has high efficiency for the hydrolysis of cefuroxime. Exhibits hydrolysis of all cephalosporins tested. Exhibits no hydrolysis of temocillin, the 6-alpha-methoxy semisynthetic derivative of ticarcillin. The sequence is that of Metallo-beta-lactamase type 2 from Pseudomonas aeruginosa.